The sequence spans 364 residues: Chorismate synthase (364 aa).

Residue arginine 47 participates in NADP(+) binding. FMN is bound by residues arginine 125 to serine 127, glycine 285, lysine 300 to serine 304, and arginine 327.

Belongs to the chorismate synthase family. In terms of assembly, homotetramer. FMNH2 serves as cofactor.

The catalysed reaction is 5-O-(1-carboxyvinyl)-3-phosphoshikimate = chorismate + phosphate. It functions in the pathway metabolic intermediate biosynthesis; chorismate biosynthesis; chorismate from D-erythrose 4-phosphate and phosphoenolpyruvate: step 7/7. Functionally, catalyzes the anti-1,4-elimination of the C-3 phosphate and the C-6 proR hydrogen from 5-enolpyruvylshikimate-3-phosphate (EPSP) to yield chorismate, which is the branch point compound that serves as the starting substrate for the three terminal pathways of aromatic amino acid biosynthesis. This reaction introduces a second double bond into the aromatic ring system. This chain is Chorismate synthase, found in Dehalococcoides mccartyi (strain ATCC BAA-2100 / JCM 16839 / KCTC 5957 / BAV1).